A 91-amino-acid polypeptide reads, in one-letter code: UPF0358 protein Sca_0738 (91 aa).

The protein belongs to the UPF0358 family.

The sequence is that of UPF0358 protein Sca_0738 from Staphylococcus carnosus (strain TM300).